A 238-amino-acid chain; its full sequence is Carboxymethylenebutenolidase (238 aa).

Residues Cys123, Asp171, and His201 contribute to the active site.

The protein belongs to the dienelactone hydrolase family. In terms of assembly, monomer.

It carries out the reaction 2-(5-oxo-2,5-dihydrofuran-2-ylidene)acetate + H2O = 4-oxohex-2-enedioate + H(+). The protein operates within aromatic compound metabolism; 3-chlorocatechol degradation. Ring cleavage of cyclic ester dienelactone to produce maleylacetate. The polypeptide is Carboxymethylenebutenolidase (tcbE) (Pseudomonas sp. (strain P51)).